Reading from the N-terminus, the 276-residue chain is 2-dehydro-3-deoxyphosphooctonate aldolase (276 aa).

This sequence belongs to the KdsA family.

Its subcellular location is the cytoplasm. The catalysed reaction is D-arabinose 5-phosphate + phosphoenolpyruvate + H2O = 3-deoxy-alpha-D-manno-2-octulosonate-8-phosphate + phosphate. It functions in the pathway carbohydrate biosynthesis; 3-deoxy-D-manno-octulosonate biosynthesis; 3-deoxy-D-manno-octulosonate from D-ribulose 5-phosphate: step 2/3. Its pathway is bacterial outer membrane biogenesis; lipopolysaccharide biosynthesis. The protein is 2-dehydro-3-deoxyphosphooctonate aldolase of Helicobacter pylori (strain Shi470).